Consider the following 99-residue polypeptide: Putative septation protein SpoVG (99 aa).

This sequence belongs to the SpoVG family.

Its function is as follows. Could be involved in septation. This Myxococcus xanthus (strain DK1622) protein is Putative septation protein SpoVG.